A 158-amino-acid polypeptide reads, in one-letter code: Transcription elongation factor GreA (158 aa).

The protein belongs to the GreA/GreB family.

Its function is as follows. Necessary for efficient RNA polymerase transcription elongation past template-encoded arresting sites. The arresting sites in DNA have the property of trapping a certain fraction of elongating RNA polymerases that pass through, resulting in locked ternary complexes. Cleavage of the nascent transcript by cleavage factors such as GreA or GreB allows the resumption of elongation from the new 3'terminus. GreA releases sequences of 2 to 3 nucleotides. The sequence is that of Transcription elongation factor GreA from Bacillus licheniformis (strain ATCC 14580 / DSM 13 / JCM 2505 / CCUG 7422 / NBRC 12200 / NCIMB 9375 / NCTC 10341 / NRRL NRS-1264 / Gibson 46).